We begin with the raw amino-acid sequence, 110 residues long: uncharacterized protein (110 aa).

A run of 3 helical transmembrane segments spans residues 32-52 (VLNV…ALVP), 57-77 (YTHM…CICI), and 90-110 (FLAS…TFVI).

The protein resides in the membrane. May play a role in proper chromosome segregation. Suppresses the high-frequency loss of mini-chromosomes when overexpressed, and this suppression is completely dependent on silencing protein SIR4. This is an uncharacterized protein from Saccharomyces cerevisiae (strain ATCC 204508 / S288c) (Baker's yeast).